A 367-amino-acid polypeptide reads, in one-letter code: Uroporphyrinogen decarboxylase (367 aa).

An N-acetylmethionine modification is found at methionine 1. Coproporphyrinogen I contacts are provided by arginine 37, alanine 39, arginine 41, arginine 50, aspartate 86, tyrosine 164, serine 219, and histidine 339. Coproporphyrinogen III contacts are provided by arginine 37, alanine 39, and arginine 41. 4 residues coordinate coproporphyrinogen III: aspartate 86, tyrosine 164, serine 219, and histidine 339.

Belongs to the uroporphyrinogen decarboxylase family. Homodimer.

Its subcellular location is the cytoplasm. It is found in the cytosol. The enzyme catalyses uroporphyrinogen III + 4 H(+) = coproporphyrinogen III + 4 CO2. It catalyses the reaction uroporphyrinogen I + 4 H(+) = coproporphyrinogen I + 4 CO2. Its pathway is porphyrin-containing compound metabolism; protoporphyrin-IX biosynthesis; coproporphyrinogen-III from 5-aminolevulinate: step 4/4. In terms of biological role, catalyzes the sequential decarboxylation of the four acetate side chains of uroporphyrinogen to form coproporphyrinogen and participates in the fifth step in the heme biosynthetic pathway. Isomer I or isomer III of uroporphyrinogen may serve as substrate, but only coproporphyrinogen III can ultimately be converted to heme. In vitro also decarboxylates pentacarboxylate porphyrinogen I. The polypeptide is Uroporphyrinogen decarboxylase (Homo sapiens (Human)).